The chain runs to 105 residues: Large ribosomal subunit protein uL24 (105 aa).

This sequence belongs to the universal ribosomal protein uL24 family. As to quaternary structure, part of the 50S ribosomal subunit.

Its function is as follows. One of two assembly initiator proteins, it binds directly to the 5'-end of the 23S rRNA, where it nucleates assembly of the 50S subunit. One of the proteins that surrounds the polypeptide exit tunnel on the outside of the subunit. This Wolbachia sp. subsp. Brugia malayi (strain TRS) protein is Large ribosomal subunit protein uL24.